Reading from the N-terminus, the 287-residue chain is 4-diphosphocytidyl-2-C-methyl-D-erythritol kinase (287 aa).

Lys-12 is a catalytic residue. Residue 94–104 participates in ATP binding; the sequence is PAQAGMGGGSS. Asp-136 is an active-site residue.

It belongs to the GHMP kinase family. IspE subfamily.

It catalyses the reaction 4-CDP-2-C-methyl-D-erythritol + ATP = 4-CDP-2-C-methyl-D-erythritol 2-phosphate + ADP + H(+). It functions in the pathway isoprenoid biosynthesis; isopentenyl diphosphate biosynthesis via DXP pathway; isopentenyl diphosphate from 1-deoxy-D-xylulose 5-phosphate: step 3/6. Functionally, catalyzes the phosphorylation of the position 2 hydroxy group of 4-diphosphocytidyl-2C-methyl-D-erythritol. The sequence is that of 4-diphosphocytidyl-2-C-methyl-D-erythritol kinase from Albidiferax ferrireducens (strain ATCC BAA-621 / DSM 15236 / T118) (Rhodoferax ferrireducens).